Here is a 415-residue protein sequence, read N- to C-terminus: L-cysteine:1D-myo-inositol 2-amino-2-deoxy-alpha-D-glucopyranoside ligase (415 aa).

Zn(2+) is bound at residue Cys-43. L-cysteinyl-5'-AMP-binding positions include 43-46, Thr-58, and 81-83; these read CGIT and NVT. Residues 45–55 carry the 'HIGH' region motif; that stretch reads ITPYDATHLGH. Positions 188–193 match the 'ERGGDP' region motif; that stretch reads ERGGDP. Residue Trp-229 coordinates L-cysteinyl-5'-AMP. A Zn(2+)-binding site is contributed by Cys-233. An L-cysteinyl-5'-AMP-binding site is contributed by 251 to 253; sequence GSD. His-258 serves as a coordination point for Zn(2+). Residue Val-285 participates in L-cysteinyl-5'-AMP binding. The 'KMSKS' region motif lies at 291 to 295; it reads KMSKS.

The protein belongs to the class-I aminoacyl-tRNA synthetase family. MshC subfamily. In terms of assembly, monomer. Requires Zn(2+) as cofactor.

The enzyme catalyses 1D-myo-inositol 2-amino-2-deoxy-alpha-D-glucopyranoside + L-cysteine + ATP = 1D-myo-inositol 2-(L-cysteinylamino)-2-deoxy-alpha-D-glucopyranoside + AMP + diphosphate + H(+). Its function is as follows. Catalyzes the ATP-dependent condensation of GlcN-Ins and L-cysteine to form L-Cys-GlcN-Ins. The protein is L-cysteine:1D-myo-inositol 2-amino-2-deoxy-alpha-D-glucopyranoside ligase of Cellulomonas flavigena (strain ATCC 482 / DSM 20109 / BCRC 11376 / JCM 18109 / NBRC 3775 / NCIMB 8073 / NRS 134).